The sequence spans 572 residues: MEPEAPRRRHTHQRGYLLTRNPHLNKDLAFTLEERQQLNIHGLLPPSFNSQEIQVLRVVKNFEHLNSDFDRYLLLMDLQDRNEKLFYRVLTSDIEKFMPIVYTPTVGLACQQYSLVFRKPRGLFITIHDRGHIASVLNAWPEDVIKAIVVTDGERILGLGDLGCNGMGIPVGKLALYTACGGMNPQECLPVILDVGTENEELLKDPLYIGLRQRRVRGSEYDDFLDEFMEAVSSKYGMNCLIQFEDFANVNAFRLLNKYRNQYCTFNDDIQGTASVAVAGLLAALRITKNKLSDQTILFQGAGEAALGIAHLIVMALEKEGLPKEKAIKKIWLVDSKGLIVKGRASLTQEKEKFAHEHEEMKNLEAIVQEIKPTALIGVAAIGGAFSEQILKDMAAFNERPIIFALSNPTSKAECSAEQCYKITKGRAIFASGSPFDPVTLPNGQTLYPGQGNNSYVFPGVALGVVACGLRQITDNIFLTTAEVIAQQVSDKHLEEGRLYPPLNTIRDVSLKIAEKIVKDAYQEKTATVYPEPQNKEAFVRSQMYSTDYDQILPDCYSWPEEVQKIQTKVDQ.

Met-1 carries the post-translational modification N-acetylmethionine. Tyr-102 functions as the Proton donor in the catalytic mechanism. Arg-155 lines the NADP(+) pocket. Residue Lys-173 is the Proton acceptor of the active site. A divalent metal cation-binding residues include Glu-245, Asp-246, and Asp-269. Residues Asp-269 and 301 to 318 (GAGE…MALE) each bind NADP(+). At Ser-336 the chain carries Phosphoserine. Position 408 (Asn-408) interacts with NADP(+).

Belongs to the malic enzymes family. Homotetramer. The cofactor is Mg(2+). Requires Mn(2+) as cofactor. Expressed in all tissues tested including liver, placenta and white adipose tissue.

Its subcellular location is the cytoplasm. The catalysed reaction is (S)-malate + NADP(+) = pyruvate + CO2 + NADPH. It carries out the reaction oxaloacetate + H(+) = pyruvate + CO2. In terms of biological role, catalyzes the oxidative decarboxylation of (S)-malate in the presence of NADP(+) and divalent metal ions, and decarboxylation of oxaloacetate. This chain is NADP-dependent malic enzyme, found in Homo sapiens (Human).